Consider the following 485-residue polypeptide: Ribulose bisphosphate carboxylase large chain (485 aa).

The substrate site is built by Asn-124 and Thr-174. The active-site Proton acceptor is Lys-176. Lys-178 is a binding site for substrate. Mg(2+) contacts are provided by Lys-202, Asp-204, and Glu-205. Position 202 is an N6-carboxylysine (Lys-202). The active-site Proton acceptor is the His-294. Positions 295, 327, and 379 each coordinate substrate.

It belongs to the RuBisCO large chain family. Type I subfamily. In terms of assembly, heterohexadecamer of 8 large chains and 8 small chains. The cofactor is Mg(2+).

It catalyses the reaction 2 (2R)-3-phosphoglycerate + 2 H(+) = D-ribulose 1,5-bisphosphate + CO2 + H2O. It carries out the reaction D-ribulose 1,5-bisphosphate + O2 = 2-phosphoglycolate + (2R)-3-phosphoglycerate + 2 H(+). RuBisCO catalyzes two reactions: the carboxylation of D-ribulose 1,5-bisphosphate, the primary event in carbon dioxide fixation, as well as the oxidative fragmentation of the pentose substrate. Both reactions occur simultaneously and in competition at the same active site. The polypeptide is Ribulose bisphosphate carboxylase large chain (Rhodopseudomonas palustris (strain ATCC BAA-98 / CGA009)).